The primary structure comprises 184 residues: Large ribosomal subunit protein uL5c (184 aa).

This sequence belongs to the universal ribosomal protein uL5 family. In terms of assembly, part of the 50S ribosomal subunit; contacts the 5S rRNA.

The protein resides in the plastid. The protein localises to the chloroplast. Its function is as follows. Binds 5S rRNA, forms part of the central protuberance of the 50S subunit. This is Large ribosomal subunit protein uL5c (rpl5) from Ostreococcus tauri.